We begin with the raw amino-acid sequence, 310 residues long: HPr kinase/phosphorylase (310 aa).

Residues His138 and Lys159 contribute to the active site. Gly153–Ser160 is a binding site for ATP. Ser160 is a Mg(2+) binding site. Asp177 serves as the catalytic Proton acceptor; for phosphorylation activity. Proton donor; for dephosphorylation activity. The interval Ile201–Asp210 is important for the catalytic mechanism of both phosphorylation and dephosphorylation. Glu202 lines the Mg(2+) pocket. Arg243 is an active-site residue. Residues Pro264–Arg269 form an important for the catalytic mechanism of dephosphorylation region.

It belongs to the HPrK/P family. As to quaternary structure, homohexamer. Mg(2+) serves as cofactor.

The enzyme catalyses [HPr protein]-L-serine + ATP = [HPr protein]-O-phospho-L-serine + ADP + H(+). The catalysed reaction is [HPr protein]-O-phospho-L-serine + phosphate + H(+) = [HPr protein]-L-serine + diphosphate. Functionally, catalyzes the ATP- as well as the pyrophosphate-dependent phosphorylation of a specific serine residue in HPr, a phosphocarrier protein of the phosphoenolpyruvate-dependent sugar phosphotransferase system (PTS). HprK/P also catalyzes the pyrophosphate-producing, inorganic phosphate-dependent dephosphorylation (phosphorolysis) of seryl-phosphorylated HPr (P-Ser-HPr). The two antagonistic activities of HprK/P are regulated by several intracellular metabolites, which change their concentration in response to the absence or presence of rapidly metabolisable carbon sources (glucose, fructose, etc.) in the growth medium. Therefore, by controlling the phosphorylation state of HPr, HPrK/P is a sensor enzyme that plays a major role in the regulation of carbon metabolism and sugar transport: it mediates carbon catabolite repression (CCR), and regulates PTS-catalyzed carbohydrate uptake and inducer exclusion. This Lactococcus lactis subsp. cremoris (strain SK11) protein is HPr kinase/phosphorylase.